Here is a 535-residue protein sequence, read N- to C-terminus: Pre-mRNA-splicing factor SLU7-A (535 aa).

Residues 21-44 (EEARKAGLAPAEVDEDGKEINPHI) are disordered. The CCHC-type zinc finger occupies 96–109 (CQNCGAMTHTAKAC). Basic and acidic residues predominate over residues 176–190 (LKKLEEKNNNEKGDD). Disordered stretches follow at residues 176–204 (LKKL…DLRV) and 489–508 (EDLS…NVKY). Positions 191–203 (ANSDGEEDEDDLR) are enriched in acidic residues. At S193 the chain carries Phosphoserine. The Nuclear localization signal signature appears at 486-493 (LKKEDLSR). The span at 489–501 (EDLSRREEKDERK) shows a compositional bias: basic and acidic residues.

This sequence belongs to the SLU7 family. Mainly expressed in tissues undergoing cell proliferation, particularly in lateral organs.

Its subcellular location is the nucleus. Functionally, participates in the second catalytic step of pre-mRNA splicing, when the free hydroxyl group of exon I attacks the 3'-splice site to generate spliced mRNA and the excised lariat intron. Together with SMP2, involved in the timing of cell cycle arrest during leaf development, in a STRUWWELPETER (SWP) dependent manner; promotes cell proliferation in developing organs. This Arabidopsis thaliana (Mouse-ear cress) protein is Pre-mRNA-splicing factor SLU7-A.